The following is a 544-amino-acid chain: Methyl-accepting chemotaxis protein McpP (544 aa).

A run of 3 helical transmembrane segments spans residues 12-32, 50-70, and 192-212; these read RLWL…LLML, VVQT…AGTL, and DASL…MLIA. Residues 213 to 267 enclose the HAMP domain; it reads RSIARPLQEAVQAMGNIASGESDLTRRLDTHGSDEITHLGEHFNRFNGKLQGVVG. The region spanning 272 to 508 is the Methyl-accepting transducer domain; that stretch reads AAHALAQSAG…EINRNVLDTA (237 aa).

This sequence belongs to the methyl-accepting chemotaxis (MCP) protein family.

The protein localises to the cell membrane. Chemotactic-signal transducers respond to changes in the concentration of attractants and repellents in the environment, transduce a signal from the outside to the inside of the cell, and facilitate sensory adaptation through the variation of the level of methylation. McpP is a chemoreceptor that responds specifically to some C2 and C3 carboxylic acids. Recognizes acetate, pyruvate, propionate, and L-lactate. The chain is Methyl-accepting chemotaxis protein McpP from Pseudomonas putida (strain ATCC 47054 / DSM 6125 / CFBP 8728 / NCIMB 11950 / KT2440).